A 363-amino-acid chain; its full sequence is MQPQVLLSSLLPLSDYISGWSWGSLLGNQPCPPLPAGDLVMRKYQMYPENFMWDKKRCVAYVSNLYNATLSIYDPYKSEVIDTISFPGLSHPGDSATPNPLHTSGLILRPDAATADLLEIVVDNGDCFFSNGNNVSGPDYLLTMDLRTKKVISQIRLNDISNGTYAGYADAELASDGNSYVVGTYVSNILRVTPQSEVSTFFVQEPLGPPREYGYTGLAHVGNVLLSNDNIAKQLVRFDIRDEKGTPVFIPQTPYHEFTTSNVMNLPEKYNNTILLAAENVTPDHPSGGVAVWRSRDQLYNEVEYLGFIPSRLTNALATAARQMSDRIYVVSVYTDGANITVAGYSSEFVLQDITVEVDALVA.

Belongs to the TRI14 family.

Functionally, part of the gene cluster that mediates the production of the antimicrobial trichothecene harzianum A (HA) that plays a role in Botrytis cinerea antagonistic activity and plant defense priming. The biosynthesis of harzianum A begins with the cyclization of farnesyl diphosphate to trichodiene and is catalyzed by the trichodiene synthase TRI5. Trichodiene undergoes a series of oxygenations catalyzed by the cytochrome P450 monooxygenase TRI4. TRI4 controls the addition of 3 oxygens at C-2, C-11, and the C-12, C-13-epoxide to form the intermediate isotrichodiol. Isotrichodiol then undergoes a non-enzymatic isomerization and cyclization to form 12,13-epoxytrichothec-9-ene (EPT) which is further converted to trichodermol by the cytochrome P450 monooxygenase TRI11 via C-4 hydroxylation. The last step of HA synthesis is esterification of an octatriendioyl moiety to the C-4 oxygen of trichodermol. The octatriendioyl moiety is probably produced by the polyketide synthase TRI17 and the esterification performed by the trichothecene O-acetyltransferase TRI3. The sequence is that of Trichothecene biosynthesis protein 14 from Trichoderma arundinaceum.